We begin with the raw amino-acid sequence, 218 residues long: Nonsense-mediated decay protein 4 (218 aa).

It is found in the cytoplasm. Involved in nonsense-mediated decay of mRNAs containing premature stop codons. The sequence is that of Nonsense-mediated decay protein 4 (NMD4) from Saccharomyces cerevisiae (strain ATCC 204508 / S288c) (Baker's yeast).